Here is a 35-residue protein sequence, read N- to C-terminus: Cupiennin-2d (35 aa).

Gln-35 carries the post-translational modification Glutamine amide.

In terms of tissue distribution, expressed by the venom gland.

It localises to the secreted. This is Cupiennin-2d from Cupiennius salei (American wandering spider).